Here is a 138-residue protein sequence, read N- to C-terminus: Acidic phospholipase A2 homolog sistruxin A (138 aa).

Positions 1–37 are cleaved as a signal peptide; that stretch reads MRALWIVAVLLLGVEGSLVEFETLIMKIAGRSGVWYY. 7 disulfides stabilise this stretch: C42–C131, C44–C60, C59–C111, C65–C138, C66–C104, C73–C97, and C91–C102. Residues 78–83 constitute a propeptide that is removed on maturation; the sequence is DVYTYR. At Q84 the chain carries Pyrrolidone carboxylic acid. The propeptide occupies 119-124; it reads YNHKYW.

This sequence belongs to the phospholipase A2 family. Group II subfamily. D49 sub-subfamily. In terms of assembly, heterodimer of an acidic subunit and a basic chain. The acidic subunit is non-toxic, without enzymatic activity and comprises 3 peptides that are cross-linked by 7 disulfide bridges. The basic subunit is toxic, has phospholipase A2 activity and is composed of a single chain. In terms of tissue distribution, expressed by the venom gland.

It localises to the secreted. Its function is as follows. Snake venom phospholipase A2 (PLA2) that inhibits neuromuscular transmission by blocking acetylcholine release from the nerve termini. This chain is Acidic phospholipase A2 homolog sistruxin A, found in Sistrurus tergeminus (Western massasauga).